Reading from the N-terminus, the 277-residue chain is Large ribosomal subunit protein uL2cz/uL2cy (277 aa).

Disordered regions lie at residues 1 to 31 (MAIH…NTRK) and 227 to 277 (NPVD…RRSK).

This sequence belongs to the universal ribosomal protein uL2 family. In terms of assembly, part of the 50S ribosomal subunit.

It is found in the plastid. The protein resides in the chloroplast. The sequence is that of Large ribosomal subunit protein uL2cz/uL2cy (rpl2-A) from Manihot esculenta (Cassava).